The following is a 420-amino-acid chain: 3-oxoacyl-[acyl-carrier-protein] synthase 2 (420 aa).

One can recognise a Ketosynthase family 3 (KS3) domain in the interval Phe-13 to Cys-419. Active-site for beta-ketoacyl synthase activity residues include Cys-173, His-314, and His-349.

The protein belongs to the thiolase-like superfamily. Beta-ketoacyl-ACP synthases family.

The protein resides in the cytoplasm. The catalysed reaction is an ultra-long-chain di-unsaturated fatty acyl-[ACP] + malonyl-[ACP] + H(+) = a 3-oxo-ultra-long-chain di-unsaturated fatty acyl-[ACP] + holo-[ACP] + CO2. It functions in the pathway lipid metabolism; mycolic acid biosynthesis. Its function is as follows. Part of the mycobacterial fatty acid elongation system FAS-II, which is involved in mycolic acid biosynthesis. Catalyzes the elongation of long chain acyl-ACP substrates by the addition of two carbons from malonyl-ACP to an acyl acceptor. Involved in extension of the mycolate chains to full lengths and produces longer chain multiunsaturated hydrocarbons averaging 54 carbons in length. The protein is 3-oxoacyl-[acyl-carrier-protein] synthase 2 (kasB) of Mycobacterium leprae (strain TN).